The sequence spans 421 residues: MTESVLDYMTRLGHAAREASRVLARTSTAQKNRALEAAAAALDDAREALAAANAQDLAAGRAGGLDEAMLDRLALTPARIDEMIEGLRQVARLPDPVGEIRDMRYMPSGIQVGKMRVPLGVIGIVYESRPNVTIDAASLCLKSGNATILRGGSEAIHSNQAIARCIRLGLAEAGLPAAAVQVVETTDRAAVGALIGMPEFVDVIVPRGGKGLIERISREAKVPVIKHLDGICHVYIDSAADLDKAIRVADNAKTQRFAPCNTMETLLVHAAIAARALPPLGEIYRAKGVELRGCPRSRELLGPGTLEASEEDWSSEYNAPILSVRVVDSLDEAIAHINRYGSHHTDAIVTESFTDARRFLAEVDSSSVMVNASTRFADGFEYGLGAEIGISTDKLHARGPVGLEGLTSEKYVVFGDGHVRG.

The protein belongs to the gamma-glutamyl phosphate reductase family.

It localises to the cytoplasm. The catalysed reaction is L-glutamate 5-semialdehyde + phosphate + NADP(+) = L-glutamyl 5-phosphate + NADPH + H(+). The protein operates within amino-acid biosynthesis; L-proline biosynthesis; L-glutamate 5-semialdehyde from L-glutamate: step 2/2. In terms of biological role, catalyzes the NADPH-dependent reduction of L-glutamate 5-phosphate into L-glutamate 5-semialdehyde and phosphate. The product spontaneously undergoes cyclization to form 1-pyrroline-5-carboxylate. The protein is Gamma-glutamyl phosphate reductase of Azotobacter vinelandii (strain DJ / ATCC BAA-1303).